Consider the following 704-residue polypeptide: Elongation factor G (704 aa).

Residues 8–291 form the tr-type G domain; the sequence is DRVRNIGIMA…AVIDYLASPV (284 aa). Residues 17–24, 90–94, and 144–147 each bind GTP; these read AHIDAGKT, DTPGH, and NKMD.

This sequence belongs to the TRAFAC class translation factor GTPase superfamily. Classic translation factor GTPase family. EF-G/EF-2 subfamily.

It is found in the cytoplasm. Functionally, catalyzes the GTP-dependent ribosomal translocation step during translation elongation. During this step, the ribosome changes from the pre-translocational (PRE) to the post-translocational (POST) state as the newly formed A-site-bound peptidyl-tRNA and P-site-bound deacylated tRNA move to the P and E sites, respectively. Catalyzes the coordinated movement of the two tRNA molecules, the mRNA and conformational changes in the ribosome. The sequence is that of Elongation factor G from Chlorobaculum tepidum (strain ATCC 49652 / DSM 12025 / NBRC 103806 / TLS) (Chlorobium tepidum).